Reading from the N-terminus, the 201-residue chain is MFTGIVEERGEVTGREALVDAARLTIRGPMVTADAGHGDSIAVNGVCLTVVDVLPDGQFTADVMAETLNRSNLGELRPGSRVNLERAAALGSRLGGHIVQGHVDATGEIVARCPSEHWEVVRIEMPASVARYVVEKGSITVDGISLTVSGLGAEQRDWFEVSLIPTTRELTTLGSAAVGTRVNLEVDVVAKYVERLMRSAG.

Lumazine-binding repeat units lie at residues methionine 1–histidine 97 and isoleucine 98–methionine 197. Residues glycine 4–valine 6, cysteine 47–threonine 49, aspartate 62–threonine 67, glycine 101–valine 103, lysine 136, serine 145–threonine 147, and serine 162–threonine 167 contribute to the 2,4-dihydroxypteridine site.

In terms of assembly, homotrimer.

The catalysed reaction is 2 6,7-dimethyl-8-(1-D-ribityl)lumazine + H(+) = 5-amino-6-(D-ribitylamino)uracil + riboflavin. It participates in cofactor biosynthesis; riboflavin biosynthesis; riboflavin from 2-hydroxy-3-oxobutyl phosphate and 5-amino-6-(D-ribitylamino)uracil: step 2/2. Catalyzes the dismutation of two molecules of 6,7-dimethyl-8-ribityllumazine, resulting in the formation of riboflavin and 5-amino-6-(D-ribitylamino)uracil. The protein is Riboflavin synthase (ribE) of Mycobacterium bovis (strain ATCC BAA-935 / AF2122/97).